Reading from the N-terminus, the 479-residue chain is Adenosylhomocysteinase (479 aa).

Substrate contacts are provided by T65, D144, and E204. 205 to 207 lines the NAD(+) pocket; sequence TTT. Residues K234 and D238 each coordinate substrate. NAD(+)-binding positions include N239, 268-273, E291, N326, 347-349, and N392; these read GYGDVG and IGH.

The protein belongs to the adenosylhomocysteinase family. It depends on NAD(+) as a cofactor.

It localises to the cytoplasm. The enzyme catalyses S-adenosyl-L-homocysteine + H2O = L-homocysteine + adenosine. The protein operates within amino-acid biosynthesis; L-homocysteine biosynthesis; L-homocysteine from S-adenosyl-L-homocysteine: step 1/1. May play a key role in the regulation of the intracellular concentration of adenosylhomocysteine. This Variovorax paradoxus (strain S110) protein is Adenosylhomocysteinase.